We begin with the raw amino-acid sequence, 378 residues long: Erythronate-4-phosphate dehydrogenase (378 aa).

Substrate is bound by residues serine 45 and threonine 66. NAD(+) contacts are provided by aspartate 146 and threonine 175. The active site involves arginine 208. Aspartate 232 contacts NAD(+). Glutamate 237 is a catalytic residue. Catalysis depends on histidine 254, which acts as the Proton donor. Glycine 257 contributes to the NAD(+) binding site. Tyrosine 258 contacts substrate.

The protein belongs to the D-isomer specific 2-hydroxyacid dehydrogenase family. PdxB subfamily. Homodimer.

It localises to the cytoplasm. It carries out the reaction 4-phospho-D-erythronate + NAD(+) = (R)-3-hydroxy-2-oxo-4-phosphooxybutanoate + NADH + H(+). It functions in the pathway cofactor biosynthesis; pyridoxine 5'-phosphate biosynthesis; pyridoxine 5'-phosphate from D-erythrose 4-phosphate: step 2/5. Functionally, catalyzes the oxidation of erythronate-4-phosphate to 3-hydroxy-2-oxo-4-phosphonooxybutanoate. The sequence is that of Erythronate-4-phosphate dehydrogenase from Citrobacter koseri (strain ATCC BAA-895 / CDC 4225-83 / SGSC4696).